The sequence spans 253 residues: REF/SRPP-like protein OsI_017815 (253 aa).

The tract at residues 1–26 (MADSGSDAPISNRPEEEVTVEKTPEM) is disordered. Over residues 13–26 (RPEEEVTVEKTPEM) the composition is skewed to basic and acidic residues.

It belongs to the REF/SRPP family.

In Oryza sativa subsp. indica (Rice), this protein is REF/SRPP-like protein OsI_017815.